Consider the following 100-residue polypeptide: Small ribosomal subunit protein uS14c (100 aa).

Positions 28–45 (KKEIKKVPSLSEKMEIHG) are enriched in basic and acidic residues. The segment at 28-59 (KKEIKKVPSLSEKMEIHGKLQSPPRNSAPTRL) is disordered.

This sequence belongs to the universal ribosomal protein uS14 family. Part of the 30S ribosomal subunit.

The protein localises to the plastid. It localises to the chloroplast. Functionally, binds 16S rRNA, required for the assembly of 30S particles. This Nandina domestica (Heavenly bamboo) protein is Small ribosomal subunit protein uS14c.